A 385-amino-acid chain; its full sequence is Cytochrome b (385 aa).

4 helical membrane passes run 32–52 (FGALAAFCLGIQIVTGIFLAM), 76–98 (WLIRYIHANGASFFFICVYIHVF), 113–133 (LWNLGVTILIVMILTAFLGYV), and 179–199 (FFSLHYLLPFVIALLSLIHVA). Heme b-binding residues include histidine 82 and histidine 96. The heme b site is built by histidine 183 and histidine 197. Residue histidine 202 participates in a ubiquinone binding. Transmembrane regions (helical) follow at residues 226-246 (FIFKDLLGIIFFLIVFCYAVF), 290-310 (LGGVITLGLALIVLFLLPFIT), 322-342 (SKTILFWSFFSVCVLLGWIGF), and 349-369 (YLMLGQMLTVLYFFYFFSLAV).

The protein belongs to the cytochrome b family. As to quaternary structure, the main subunits of complex b-c1 are: cytochrome b, cytochrome c1 and the Rieske protein. The cofactor is heme b.

Its subcellular location is the mitochondrion inner membrane. Functionally, component of the ubiquinol-cytochrome c reductase complex (complex III or cytochrome b-c1 complex) that is part of the mitochondrial respiratory chain. The b-c1 complex mediates electron transfer from ubiquinol to cytochrome c. Contributes to the generation of a proton gradient across the mitochondrial membrane that is then used for ATP synthesis. The protein is Cytochrome b (MT-CYB) of Acanthamoeba castellanii (Amoeba).